A 593-amino-acid polypeptide reads, in one-letter code: UvrABC system protein C (593 aa).

The GIY-YIG domain maps to 13 to 91 (TTPGVYMMKD…IKEYRPKYNV (79 aa)). The UVR domain maps to 202–237 (DEIVEELKKKMFEYADNLMFEKAQEIKNKITSLEQI).

Belongs to the UvrC family. As to quaternary structure, interacts with UvrB in an incision complex.

Its subcellular location is the cytoplasm. In terms of biological role, the UvrABC repair system catalyzes the recognition and processing of DNA lesions. UvrC both incises the 5' and 3' sides of the lesion. The N-terminal half is responsible for the 3' incision and the C-terminal half is responsible for the 5' incision. This chain is UvrABC system protein C, found in Caldicellulosiruptor saccharolyticus (strain ATCC 43494 / DSM 8903 / Tp8T 6331).